Here is a 64-residue protein sequence, read N- to C-terminus: Conotoxin reg3k (64 aa).

The first 20 residues, 1-20, serve as a signal peptide directing secretion; that stretch reads MMFKLGVLLTICLLLFPLTA. Positions 21-48 are excised as a propeptide; sequence LQLDWDQPGDHMLDISSEIDDRWFDPVR. Disulfide bonds link Cys-50–Cys-60, Cys-51–Cys-58, and Cys-56–Cys-61. Pro-59 bears the 4-hydroxyproline mark.

Expressed by the venom duct.

It is found in the secreted. The protein is Conotoxin reg3k of Conus regius (Crown cone).